We begin with the raw amino-acid sequence, 395 residues long: Vomeronasal type-1 receptor 2 (395 aa).

A helical transmembrane segment spans residues 12–32 (LYPINISAAWHLGPLPVSCFV). Topologically, residues 33-51 (SNKYQCSLAFGATTGLRVL) are extracellular. A helical membrane pass occupies residues 52-72 (VVVVPQTQLSFLSSLCLVSLF). Over 73–93 (LHSLVSAHGEKPTKPVGLDPT) the chain is Cytoplasmic. Residues 94 to 114 (LFQVVVGILGNFSLLYYYMFL) traverse the membrane as a helical segment. Residues 115 to 170 (YFRGYKPRSTDLILRHLTVADSLVILSKRIPETMATFGLKHFDNYFGCKFLLYAHR) lie on the Extracellular side of the membrane. A helical membrane pass occupies residues 171 to 191 (VGRGVSIGSTCLLSVFQVITI). The Cytoplasmic segment spans residues 192–208 (NPRNSRWAEMKVKAPTY). The chain crosses the membrane as a helical span at residues 209 to 229 (IGLSNILCWAFHMLVNAIFPI). At 230-267 (YTTGKWSNNNITKKGDLGYCSAPLSDEVTKSVYAALTS) the chain is on the extracellular side. N239 carries N-linked (GlcNAc...) asparagine glycosylation. Residues 268–288 (FHDVLCLGLMLWASSSIVLVL) form a helical membrane-spanning segment. Residues 289–316 (YRHKQQVQHICRNNLYPNSSPGNRAIQS) are Cytoplasmic-facing. Residues 317 to 337 (ILALVSTFALCYALSFITYVY) form a helical membrane-spanning segment. Topologically, residues 338–346 (LALFDNSSW) are extracellular. N343 carries N-linked (GlcNAc...) asparagine glycosylation. Residues 347–367 (WLVNTAALIIACFPTISPFVL) traverse the membrane as a helical segment. Over 368–395 (MCRDPSRSRLCSICCRRNRRFFHDFRKM) the chain is Cytoplasmic.

This sequence belongs to the G-protein coupled receptor 1 family.

The protein localises to the cell membrane. Functionally, putative pheromone receptor. This chain is Vomeronasal type-1 receptor 2 (VN1R2), found in Homo sapiens (Human).